Here is an 835-residue protein sequence, read N- to C-terminus: Protein translocase subunit SecA 1 (835 aa).

ATP contacts are provided by residues Gln85, 103-107 (GEGKT), and Asp492. The disordered stretch occupies residues 788 to 807 (VQGEAVHPSSDGEEAKKKPV). Positions 819, 821, 830, and 831 each coordinate Zn(2+).

It belongs to the SecA family. As to quaternary structure, monomer and homodimer. Part of the essential Sec protein translocation apparatus which comprises SecA, SecYEG and auxiliary proteins SecDF. Other proteins may also be involved. It depends on Zn(2+) as a cofactor.

The protein localises to the cell membrane. Its subcellular location is the cytoplasm. The enzyme catalyses ATP + H2O + cellular proteinSide 1 = ADP + phosphate + cellular proteinSide 2.. In terms of biological role, part of the Sec protein translocase complex. Interacts with the SecYEG preprotein conducting channel. Has a central role in coupling the hydrolysis of ATP to the transfer of proteins into and across the cell membrane, serving as an ATP-driven molecular motor driving the stepwise translocation of polypeptide chains across the membrane. The chain is Protein translocase subunit SecA 1 from Bacillus anthracis.